The chain runs to 275 residues: NADPH-dependent 7-cyano-7-deazaguanine reductase (275 aa).

81–83 (VES) contributes to the substrate binding site. 83–84 (SK) contributes to the NADPH binding site. Cys-182 (thioimide intermediate) is an active-site residue. Asp-189 functions as the Proton donor in the catalytic mechanism. Substrate is bound at residue 221 to 222 (HE). Position 250-251 (250-251 (RG)) interacts with NADPH.

It belongs to the GTP cyclohydrolase I family. QueF type 2 subfamily. As to quaternary structure, homodimer.

It localises to the cytoplasm. It carries out the reaction 7-aminomethyl-7-carbaguanine + 2 NADP(+) = 7-cyano-7-deazaguanine + 2 NADPH + 3 H(+). It participates in tRNA modification; tRNA-queuosine biosynthesis. Functionally, catalyzes the NADPH-dependent reduction of 7-cyano-7-deazaguanine (preQ0) to 7-aminomethyl-7-deazaguanine (preQ1). In Polaromonas sp. (strain JS666 / ATCC BAA-500), this protein is NADPH-dependent 7-cyano-7-deazaguanine reductase.